Reading from the N-terminus, the 1028-residue chain is Serine/threonine-protein kinase fray2 (1028 aa).

The tract at residues 1–67 (MSDDKYHHDK…PKPRKNYPNS (67 aa)) is disordered. Positions 20 to 54 (KQSTAAALSSSSTLASSSSMTTTTTTTSTTTTAAS) are enriched in low complexity. In terms of domain architecture, Protein kinase spans 71 to 330 (YELKETIGKG…PSKLLEHRFF (260 aa)). ATP is bound by residues 77 to 85 (IGKGGSGLV) and Lys100. Catalysis depends on Asp195, which acts as the Proton acceptor. Thr230 is subject to Phosphothreonine; by autocatalysis. Residues 368-381 (TSSPQFDTGHSNSA) are compositionally biased toward polar residues. 3 disordered regions span residues 368–467 (TSSP…STVV), 486–561 (AYHQ…LQQP), and 580–914 (DLIT…IQSK). 2 stretches are compositionally biased toward low complexity: residues 387-419 (PNEN…NNNN) and 432-458 (TPSH…SNHT). 2 stretches are compositionally biased toward polar residues: residues 503 to 518 (IPNH…SAHS) and 528 to 542 (IHPT…VVNN). Residues 543–561 (TQQPQTLQPPQQQHQLQQP) show a composition bias toward low complexity. Residues 595 to 616 (IPSSSSHGNIPSLVTTSPKSPL) are compositionally biased toward polar residues. Low complexity-rich tracts occupy residues 617–642 (QHQQ…ISSN) and 683–700 (SSRA…SHTS). Composition is skewed to basic and acidic residues over residues 701 to 714 (SSDE…SDRK), 728 to 742 (SKRD…DRSN), 753 to 855 (VSRD…DRSR), and 865 to 893 (SRDS…DYKS).

It belongs to the protein kinase superfamily. STE Ser/Thr protein kinase family. STE20 subfamily. The cofactor is Mn(2+). Post-translationally, undergoes autophosphorylation in the catalytic domain.

The enzyme catalyses L-seryl-[protein] + ATP = O-phospho-L-seryl-[protein] + ADP + H(+). The catalysed reaction is L-threonyl-[protein] + ATP = O-phospho-L-threonyl-[protein] + ADP + H(+). The polypeptide is Serine/threonine-protein kinase fray2 (Dictyostelium discoideum (Social amoeba)).